The primary structure comprises 454 residues: Tumor necrosis factor receptor superfamily member 1A (454 aa).

Residues 1-29 (MGLPTVPGLLLSLVLLALLMGIHPSGVTG) form the signal peptide. The Extracellular portion of the chain corresponds to 30–212 (LVPSLGDREK…VTNPQDSGTA (183 aa)). TNFR-Cys repeat units follow at residues 43–82 (LCPQ…TVCR), 83–125 (ECEK…DTVC), 126–166 (GCKE…NTVC), and 167–196 (NCHA…KLCL). Intrachain disulfides connect Cys44-Cys58, Cys59-Cys72, Cys62-Cys81, Cys84-Cys99, Cys102-Cys117, Cys105-Cys125, Cys127-Cys143, Cys146-Cys158, Cys149-Cys166, Cys168-Cys179, Cys182-Cys195, and Cys185-Cys191. Asn54 is a glycosylation site (N-linked (GlcNAc...) asparagine). The N-linked (GlcNAc...) asparagine glycan is linked to Asn151. A glycan (N-linked (GlcNAc...) asparagine) is linked at Asn202. Residues 213–235 (VLLPLVILLGLCLLSFIFISLMC) form a helical membrane-spanning segment. Residues 236-454 (RYPRWRPEVY…APSSTTRLPR (219 aa)) lie on the Cytoplasmic side of the membrane. Residues 339 to 349 (VQKWEDSAHPQ) are N-SMase activation domain (NSD). The Death domain maps to 356-441 (LAILYAVVDG…GCLENILEAL (86 aa)). Arg376 carries a (Microbial infection) N-beta-linked (GlcNAc) arginine glycan.

In terms of assembly, binding of TNF to the extracellular domain leads to homotrimerization. The aggregated death domains provide a novel molecular interface that interacts specifically with the death domain of TRADD. Various TRADD-interacting proteins such as TRAFS, RIPK1 and possibly FADD, are recruited to the complex by their association with TRADD. This complex activates at least two distinct signaling cascades, apoptosis and NF-kappa-B signaling. Interacts with BAG4, BABAM2, FEM1B, GRB2, SQSTM1 and TRPC4AP. Interacts with DAB2IP. Interacts directly with NOL3 (via CARD domain); inhibits TNF-signaling pathway. Interacts with SH3RF2, TRADD and RIPK1. SH3RF2 facilitates the recruitment of RIPK1 and TRADD to TNFRSF1A in a TNF-alpha-dependent process. Interacts with PGLYRP1; this interaction is important for cell death induction. Interacts (via death domain) with MADD (via death domain). In terms of processing, (Microbial infection) Glycosylated at Arg-376 by S.typhimurium protein Ssek3: arginine GlcNAcylation prevents homotypic/heterotypic death domain interactions.

The protein resides in the cell membrane. The protein localises to the golgi apparatus membrane. Receptor for TNFSF2/TNF-alpha and homotrimeric TNFSF1/lymphotoxin-alpha. The adapter molecule FADD recruits caspase-8 to the activated receptor. The resulting death-inducing signaling complex (DISC) performs caspase-8 proteolytic activation which initiates the subsequent cascade of caspases (aspartate-specific cysteine proteases) mediating apoptosis. This Mus musculus (Mouse) protein is Tumor necrosis factor receptor superfamily member 1A (Tnfrsf1a).